Reading from the N-terminus, the 384-residue chain is S-adenosylmethionine synthase (384 aa).

His15 serves as a coordination point for ATP. Asp17 contacts Mg(2+). Position 43 (Glu43) interacts with K(+). Positions 56 and 99 each coordinate L-methionine. The flexible loop stretch occupies residues 99 to 109 (QSPDINQGVDK). ATP is bound by residues 164-166 (DAK), 230-231 (RF), Asp239, 245-246 (RK), Ala262, and Lys266. Asp239 is a binding site for L-methionine. Position 270 (Lys270) interacts with L-methionine.

This sequence belongs to the AdoMet synthase family. Homotetramer; dimer of dimers. The cofactor is Mg(2+). Requires K(+) as cofactor.

It localises to the cytoplasm. It carries out the reaction L-methionine + ATP + H2O = S-adenosyl-L-methionine + phosphate + diphosphate. Its pathway is amino-acid biosynthesis; S-adenosyl-L-methionine biosynthesis; S-adenosyl-L-methionine from L-methionine: step 1/1. In terms of biological role, catalyzes the formation of S-adenosylmethionine (AdoMet) from methionine and ATP. The overall synthetic reaction is composed of two sequential steps, AdoMet formation and the subsequent tripolyphosphate hydrolysis which occurs prior to release of AdoMet from the enzyme. In Aliivibrio fischeri (strain ATCC 700601 / ES114) (Vibrio fischeri), this protein is S-adenosylmethionine synthase.